The chain runs to 246 residues: Osmotin-like protein TPM-1 (246 aa).

The N-terminal stretch at 1 to 21 (MAYLRSSFVFFLLAFVTYTYA) is a signal peptide. 8 disulfide bridges follow: Cys-30–Cys-225, Cys-72–Cys-82, Cys-87–Cys-93, Cys-141–Cys-213, Cys-146–Cys-196, Cys-154–Cys-164, Cys-168–Cys-177, and Cys-178–Cys-183.

Belongs to the thaumatin family.

It localises to the vacuole. The enzyme catalyses Endohydrolysis of (1-&gt;3)- or (1-&gt;4)-linkages in beta-D-glucans when the glucose residue whose reducing group is involved in the linkage to be hydrolyzed is itself substituted at C-3.. Its function is as follows. Antifungal protein that inhibits the growth of several phytopathogenic fungi (e.g. Trichothecium roseum, Fusarium oxysporum, Phytophthora citrophthora and Colletotrichum coccodes). May bind to beta-glucans and have beta-1,3-D-glucanase activity. The chain is Osmotin-like protein TPM-1 from Solanum lycopersicum (Tomato).